Reading from the N-terminus, the 349-residue chain is tRNA pseudouridine synthase D (349 aa).

Residues 1–22 (MTDAPLVTAELPGSGGSLRRSP) are disordered. D78 functions as the Nucleophile in the catalytic mechanism. In terms of domain architecture, TRUD spans 150–304 (GLPNLFGPQR…AEGTRRAARL (155 aa)).

This sequence belongs to the pseudouridine synthase TruD family.

It catalyses the reaction uridine(13) in tRNA = pseudouridine(13) in tRNA. Its function is as follows. Responsible for synthesis of pseudouridine from uracil-13 in transfer RNAs. The sequence is that of tRNA pseudouridine synthase D from Anaeromyxobacter sp. (strain Fw109-5).